The following is an 89-amino-acid chain: MSIFNYLRRRASTASVAKERLQIIISHERSQRNTPDYLPKLQEEILAVIAKYVNISRDQVSVNLERMEDSAVLELNITMPDKALEDSNS.

The protein belongs to the MinE family.

Prevents the cell division inhibition by proteins MinC and MinD at internal division sites while permitting inhibition at polar sites. This ensures cell division at the proper site by restricting the formation of a division septum at the midpoint of the long axis of the cell. In Legionella pneumophila (strain Paris), this protein is Cell division topological specificity factor.